The sequence spans 1091 residues: Sodium/potassium exporting P-type ATPase 5 (1091 aa).

The Cytoplasmic segment spans residues 1-63 (MSEGTVKENN…LGDDTKIDYK (63 aa)). Residues 64–84 (AMVLHQVCNAMIMVLVISMAI) form a helical membrane-spanning segment. Over 85-90 (SFAVRD) the chain is Extracellular. A helical membrane pass occupies residues 91-111 (WITGGVISFVIAVNVLIGLVQ). Topologically, residues 112-282 (EYKATKTMNS…TNVGTPLHRK (171 aa)) are cytoplasmic. Residues 283 to 303 (LSKLAVLLFWIAVLFAIIVMA) form a helical membrane-spanning segment. The Extracellular segment spans residues 304–312 (SQKFDVDKR). Residues 313-333 (VAIYAICVALSMIPSSLVVVL) form a helical membrane-spanning segment. The Cytoplasmic portion of the chain corresponds to 334–815 (TITMSVGAAV…RRMTDNIQKF (482 aa)). D369 (4-aspartylphosphate intermediate) is an active-site residue. Mg(2+) is bound by residues D369 and T371. ATP contacts are provided by T371 and E483. A disordered region spans residues 499 to 525 (ALTGEKSTNQSNENDQSSLSQHNEKPG). Positions 503–519 (EKSTNQSNENDQSSLSQ) are enriched in polar residues. 7 residues coordinate ATP: K561, R606, T673, G674, D675, R732, and K738. D757 serves as a coordination point for Mg(2+). Residue N760 participates in ATP binding. A helical transmembrane segment spans residues 816-836 (VLQLLAENVAQALYLIIGLVF). At 837–848 (RDENGKSVFPLS) the chain is on the extracellular side. A helical transmembrane segment spans residues 849–869 (PVEVLWIIVVTSCFPAMGLGL). Over 870–885 (EKAAPDLMDRPPNDSE) the chain is Cytoplasmic. A helical membrane pass occupies residues 886–906 (VGIFTWEVIIDTFAYGIIMTG). At 907–943 (SCMASFTGSLYGINSGRLGHDCDGTYNSSCRDVYRSR) the chain is on the extracellular side. A helical transmembrane segment spans residues 944 to 964 (SAAFATMTWCALILAWEVVDM). Over 965-991 (RRSFFRMHPDTDSPVKEFFRSIWGNQF) the chain is Cytoplasmic. The helical transmembrane segment at 992-1012 (LFWSIIFGFVSAFPVVYIPVI) threads the bilayer. Residues 1013–1021 (NDKVFLHKP) are Extracellular-facing. A helical membrane pass occupies residues 1022–1042 (IGAEWGLAIAFTIAFWIGAEL). Over 1043 to 1091 (YKCGKRRYFKTQRAHNSENDLERSSKHDPFEAYSTSTTLQSEINISVKH) the chain is Cytoplasmic.

This sequence belongs to the cation transport ATPase (P-type) (TC 3.A.3) family. Type IID subfamily. Mg(2+) serves as cofactor. Post-translationally, the active site is phosphorylated in presence of sodium or potassium and in conditions of higher pH. Not phosphorylated in presence of calcium ions.

It localises to the cell membrane. The catalysed reaction is Na(+)(in) + ATP + H2O = Na(+)(out) + ADP + phosphate + H(+). It catalyses the reaction K(+)(in) + ATP + H2O = K(+)(out) + ADP + phosphate + H(+). Its function is as follows. Catalyzes the hydrolysis of ATP coupled with the export of sodium and potassium from the cell. May export potassium less efficiently. May transport other cations such as lithium. Sodium/potassium efflux ATPases are involved in salt tolerance and maintaining the membrane potential across the plasma membrane in high salinity (Na+) or alkaline (K+) environments. The protein is Sodium/potassium exporting P-type ATPase 5 of Saccharomyces cerevisiae (strain ATCC 204508 / S288c) (Baker's yeast).